We begin with the raw amino-acid sequence, 276 residues long: MKISVKLIKELRIKTGSGYLECKRALQKSNGNIINAINYLRIVGTDIAQRKVLRKTKFGRIFSYCSKNLGVLLELTSETDFVSKNEEFKNFGEKIVNFSGNNKIFDLTEINEIFNSKKINFISRVRENIEINKIKYITGNIIESYQHLGKIGVIISGKMLSPNTHLNTTKCFKNIAMHVAAAAPLYLSELDIPNNVLQKETDIQKSIAKKTGKSSKILQAIIKGRLKKFISEITLINQNFIINPKITIHDYLKENQVWINNFIRLQVGENIDNLNT.

The involved in Mg(2+) ion dislocation from EF-Tu stretch occupies residues 79–82; sequence TDFV.

Belongs to the EF-Ts family.

Its subcellular location is the cytoplasm. Its function is as follows. Associates with the EF-Tu.GDP complex and induces the exchange of GDP to GTP. It remains bound to the aminoacyl-tRNA.EF-Tu.GTP complex up to the GTP hydrolysis stage on the ribosome. This Buchnera aphidicola subsp. Cinara cedri (strain Cc) protein is Elongation factor Ts.